The primary structure comprises 151 residues: Neuroglobin (151 aa).

Residues methionine 1–aspartate 149 form the Globin domain. Cysteine 46 and cysteine 55 form a disulfide bridge. Histidine 64 and histidine 96 together coordinate heme b.

It belongs to the globin family. As to quaternary structure, monomer. Homodimer and homotetramer; disulfide-linked. Mainly monomeric but also detected as part of homodimers and homotetramers. Interacts with 14-3-3 proteins; regulates the phosphorylation of NGB. Could interact (ferrous form) with G-alpha(i) proteins (GTP-bound form). Post-translationally, phosphorylated during hypoxia by ERK1/ERK2. Phosphorylation regulates the heme pocket hexacoordination preventing the association of His-64 with the heme metal center. Thereby, promotes the access of dioxygen and nitrite to the heme and stimulates the nitrite reductase activity. Phosphorylation during hypoxia is stabilized by 14-3-3 proteins. In terms of processing, an intramolecular Cys-46/Cys-55 disulfide bond, not necessarily present in orthologs, regulates the heme pocket hexacoordination preventing the association of His-64 with the heme metal center. Thereby, promotes the access of dioxygen and nitrite to the heme and stimulates the nitrite reductase activity. Predominantly expressed in brain, the strongest expression is seen in the frontal lobe, the subthalamic nucleus and the thalamus.

The protein localises to the cytoplasm. Its subcellular location is the cytosol. It localises to the mitochondrion matrix. The enzyme catalyses Fe(III)-heme b-[protein] + nitric oxide + H2O = Fe(II)-heme b-[protein] + nitrite + 2 H(+). Functionally, monomeric globin with a bis-histidyl six-coordinate heme-iron atom through which it can bind dioxygen, carbon monoxide and nitric oxide. Could help transport oxygen and increase its availability to the metabolically active neuronal tissues, though its low quantity in tissues as well as its high affinity for dioxygen, which may limit its oxygen-releasing ability, argue against it. The ferrous/deoxygenated form exhibits a nitrite reductase activity and it could produce nitric oxide which in turn inhibits cellular respiration in response to hypoxia. In its ferrous/deoxygenated state, it may also exhibit GDI (Guanine nucleotide Dissociation Inhibitor) activity toward heterotrimeric G-alpha proteins, thereby regulating signal transduction to facilitate neuroprotective responses in the wake of hypoxia and associated oxidative stress. This Homo sapiens (Human) protein is Neuroglobin.